We begin with the raw amino-acid sequence, 250 residues long: NADH-quinone oxidoreductase subunit C (250 aa).

Disordered stretches follow at residues 1–33 (MSDDSSDVKPGPKGPEQPAVEQSPENVPAPTGE) and 228–250 (LGGVPVEYKGGTVPPPDQRRSYN).

The protein belongs to the complex I 30 kDa subunit family. As to quaternary structure, NDH-1 is composed of 14 different subunits. Subunits NuoB, C, D, E, F, and G constitute the peripheral sector of the complex.

Its subcellular location is the cell membrane. The catalysed reaction is a quinone + NADH + 5 H(+)(in) = a quinol + NAD(+) + 4 H(+)(out). Functionally, NDH-1 shuttles electrons from NADH, via FMN and iron-sulfur (Fe-S) centers, to quinones in the respiratory chain. The immediate electron acceptor for the enzyme in this species is believed to be a menaquinone. Couples the redox reaction to proton translocation (for every two electrons transferred, four hydrogen ions are translocated across the cytoplasmic membrane), and thus conserves the redox energy in a proton gradient. The protein is NADH-quinone oxidoreductase subunit C of Nocardioides sp. (strain ATCC BAA-499 / JS614).